Consider the following 377-residue polypeptide: uncharacterized protein (377 aa).

This is an uncharacterized protein from Caenorhabditis elegans.